The primary structure comprises 495 residues: MTTDSEQPNTDFRPEARAPRGFADKRARDLRAERAILEAVSAVYERYGFEALDTGAFEYADALGKFLPDSDRPNEGVFALQDDDDQWMALRYDLTAPLARFAAQNWETLPKPFRRYAFGPVWRNEKPGPGRFRQFIQCDADTVGSARPEADAEIIAMAVEGLEAAGLPRGTAVLKINNRKLLNGLLTAAGADSAGQKLAVLRAVDKLDRLGVDGVRLLLGEGRLDESGDFTKGAGLKGKAVDQVLDFVQAGSTGGRAATLDNIARVVAGSAEGDEGLLELSRIDAALSSLGIADDQAFIDPSIVRGLEYYTGAVFEAELLLSTTDEKGNKVSFGSIGGGGRYDDLVARFTGNVTPATGFSFGVSRLAAALRAAGREPGGAARGPVVVITFDQAHMGEYFSVVGQLRAAGIAAEVYLGTSGMKPQMKYADRRGAPAVVMLGGDEIAAGTVTIKDLDAGRMAAEGLTDNAAWKAERPGQQTIPRDQLVDAVRKIIGG.

Over residues 1–10 the composition is skewed to polar residues; sequence MTTDSEQPNT. The interval 1–24 is disordered; the sequence is MTTDSEQPNTDFRPEARAPRGFAD. Positions 12-24 are enriched in basic and acidic residues; sequence FRPEARAPRGFAD.

Belongs to the class-II aminoacyl-tRNA synthetase family. Homodimer.

Its subcellular location is the cytoplasm. It catalyses the reaction tRNA(His) + L-histidine + ATP = L-histidyl-tRNA(His) + AMP + diphosphate + H(+). The protein is Histidine--tRNA ligase (hisS) of Caulobacter vibrioides (strain ATCC 19089 / CIP 103742 / CB 15) (Caulobacter crescentus).